A 162-amino-acid polypeptide reads, in one-letter code: MGCCYSGETDTGKGDQGEREHLLPQNQSLPNNKQNGSEQNPTNNPSARTDEQAMLSRILAKTAQNIIDVSAVESQGMEQHECMDRARQYSTRLAKLSSNLMDWKNVPPLPSLTSQPHQILASDPVPFTDIQQVSKIAAYAFSALSQIRVDAKEDLVVQFGIP.

Residues 1 to 50 (MGCCYSGETDTGKGDQGEREHLLPQNQSLPNNKQNGSEQNPTNNPSARTD) form a disordered region. G2 carries N-myristoyl glycine lipidation. 2 S-palmitoyl cysteine lipidation sites follow: C3 and C4. The segment covering 10 to 22 (DTGKGDQGEREHL) has biased composition (basic and acidic residues). The segment covering 24-47 (PQNQSLPNNKQNGSEQNPTNNPSA) has biased composition (polar residues).

Belongs to the LAMTOR1 family. As to quaternary structure, part of the Ragulator complex composed of lamtor1, lamtor2, lamtor3, lamtor4 and lamtor5. The Ragulator complex interacts with slc38a9; the probable amino acid sensor. Component of the lysosomal folliculin complex (LFC). N-terminal myristoylation and palmitoylation mediates its recruitment to lysosome membranes, thereby promoting localization of the Ragulator complex to lysosomes. N-myristoylation by NMT1 is required for palmitoylation at Cys-3 and Cys-4.

It localises to the lysosome membrane. The protein resides in the late endosome membrane. Functionally, key component of the Ragulator complex, a multiprotein complex involved in amino acid sensing and activation of mTORC1, a signaling complex promoting cell growth in response to growth factors, energy levels, and amino acids. Activated by amino acids through a mechanism involving the lysosomal V-ATPase, the Ragulator plays a dual role for the small GTPases Rag (RagA/RRAGA, RagB/RRAGB, RagC/RRAGC and/or RagD/RRAGD): it (1) acts as a guanine nucleotide exchange factor (GEF), activating the small GTPases Rag and (2) mediates recruitment of Rag GTPases to the lysosome membrane. Activated Ragulator and Rag GTPases function as a scaffold recruiting mTORC1 to lysosomes where it is in turn activated. LAMTOR1 is directly responsible for anchoring the Ragulator complex to the lysosomal membrane. LAMTOR1 wraps around the other subunits of the Ragulator complex to hold them in place and interacts with the Rag GTPases, thereby playing a key role in the recruitment of the mTORC1 complex to lysosomes. The sequence is that of Ragulator complex protein LAMTOR1 (lamtor1) from Xenopus laevis (African clawed frog).